The primary structure comprises 303 residues: NAC domain-containing protein 48 (303 aa).

One can recognise an NAC domain in the interval 9 to 159; it reads LPPGFRFHPT…DWVLCRIYNK (151 aa).

In terms of assembly, interacts with NAC071. In terms of tissue distribution, widely expressed.

It is found in the nucleus. Functionally, transcription activator that binds to the promoter of the stress response gene LEA19. Involved in tolerance to abiotic stresses. Transcription activator involved in response to abiotic and biotic stresses. Involved in drought and salt stress responses, and defense response to the rice blast fungus. Transcription activator involved tolerance to cold and salt stresses. Transcription activator involved in tolerance to drought stress. Targets directly and activates genes involved in membrane modification, nicotianamine (NA) biosynthesis, glutathione relocation, accumulation of phosphoadenosine phosphosulfate and glycosylation in roots. Controls root growth at early vegetative stage through chromatin modification and histone lysine deacytaltion by HDAC1. This chain is NAC domain-containing protein 48, found in Oryza sativa subsp. japonica (Rice).